Reading from the N-terminus, the 372-residue chain is Aminomethyltransferase (372 aa).

It belongs to the GcvT family. The glycine cleavage system is composed of four proteins: P, T, L and H.

It catalyses the reaction N(6)-[(R)-S(8)-aminomethyldihydrolipoyl]-L-lysyl-[protein] + (6S)-5,6,7,8-tetrahydrofolate = N(6)-[(R)-dihydrolipoyl]-L-lysyl-[protein] + (6R)-5,10-methylene-5,6,7,8-tetrahydrofolate + NH4(+). Functionally, the glycine cleavage system catalyzes the degradation of glycine. This chain is Aminomethyltransferase, found in Burkholderia orbicola (strain MC0-3).